A 351-amino-acid chain; its full sequence is Ion-translocating oxidoreductase complex subunit D (351 aa).

The next 4 helical transmembrane spans lie at 18 to 38 (IMLLVILACIPGIIAQTYFFG), 40 to 60 (GSLIQVMLAMITALLAEGAVL), 87 to 107 (LPPLAPWWMIVLGTLFAIVIA), and 121 to 141 (PAMVGYVVLLISFPVQMTSWL). Position 185 is an FMN phosphoryl threonine (threonine 185). A run of 5 helical transmembrane segments spans residues 211–231 (VLAGLGWQWVNTGFLVGGLLL), 241–261 (IPVSFLLALGGCAAVSWMIAP), 264–284 (FASPMLHLFSGATMLGAFFIA), 298–318 (LIFGALIGILVWLIRVYGGYP), and 321–341 (VAFAVLLANITVPLIDHYTQP).

Belongs to the NqrB/RnfD family. The complex is composed of six subunits: RnfA, RnfB, RnfC, RnfD, RnfE and RnfG. FMN serves as cofactor.

The protein localises to the cell inner membrane. Part of a membrane-bound complex that couples electron transfer with translocation of ions across the membrane. This Yersinia pestis protein is Ion-translocating oxidoreductase complex subunit D.